The sequence spans 607 residues: Elongation factor 4 (607 aa).

Positions 11 to 193 (ENIRNFSIIA…KIVEVVPAPD (183 aa)) constitute a tr-type G domain. GTP contacts are provided by residues 23–28 (DHGKST) and 140–143 (NKID).

The protein belongs to the TRAFAC class translation factor GTPase superfamily. Classic translation factor GTPase family. LepA subfamily.

It localises to the cell membrane. It carries out the reaction GTP + H2O = GDP + phosphate + H(+). Functionally, required for accurate and efficient protein synthesis under certain stress conditions. May act as a fidelity factor of the translation reaction, by catalyzing a one-codon backward translocation of tRNAs on improperly translocated ribosomes. Back-translocation proceeds from a post-translocation (POST) complex to a pre-translocation (PRE) complex, thus giving elongation factor G a second chance to translocate the tRNAs correctly. Binds to ribosomes in a GTP-dependent manner. The chain is Elongation factor 4 from Staphylococcus aureus (strain N315).